Consider the following 246-residue polypeptide: tRNA (guanine-N(1)-)-methyltransferase (246 aa).

S-adenosyl-L-methionine-binding positions include G113 and 132-137 (LGDFVV).

This sequence belongs to the RNA methyltransferase TrmD family. Homodimer.

The protein resides in the cytoplasm. The catalysed reaction is guanosine(37) in tRNA + S-adenosyl-L-methionine = N(1)-methylguanosine(37) in tRNA + S-adenosyl-L-homocysteine + H(+). Its function is as follows. Specifically methylates guanosine-37 in various tRNAs. In Latilactobacillus sakei subsp. sakei (strain 23K) (Lactobacillus sakei subsp. sakei), this protein is tRNA (guanine-N(1)-)-methyltransferase.